The chain runs to 75 residues: UPF0352 protein VF_1649 (75 aa).

Belongs to the UPF0352 family.

The polypeptide is UPF0352 protein VF_1649 (Aliivibrio fischeri (strain ATCC 700601 / ES114) (Vibrio fischeri)).